The primary structure comprises 252 residues: Glucosamine-6-phosphate deaminase (252 aa).

D67 functions as the Proton acceptor; for enolization step in the catalytic mechanism. Catalysis depends on N137, which acts as the For ring-opening step. H139 functions as the Proton acceptor; for ring-opening step in the catalytic mechanism. E144 functions as the For ring-opening step in the catalytic mechanism.

The protein belongs to the glucosamine/galactosamine-6-phosphate isomerase family. NagB subfamily.

It carries out the reaction alpha-D-glucosamine 6-phosphate + H2O = beta-D-fructose 6-phosphate + NH4(+). It participates in amino-sugar metabolism; N-acetylneuraminate degradation; D-fructose 6-phosphate from N-acetylneuraminate: step 5/5. Catalyzes the reversible isomerization-deamination of glucosamine 6-phosphate (GlcN6P) to form fructose 6-phosphate (Fru6P) and ammonium ion. This is Glucosamine-6-phosphate deaminase from Staphylococcus aureus (strain Mu3 / ATCC 700698).